The primary structure comprises 204 residues: Probable GTP-binding protein EngB (204 aa).

One can recognise an EngB-type G domain in the interval Ser-27 to Pro-201. GTP-binding positions include Gly-35–Ser-42, Gly-62–Leu-66, Asp-80–Gly-83, Thr-147–Asp-150, and Phe-180–Ala-182. Mg(2+) contacts are provided by Ser-42 and Thr-64.

This sequence belongs to the TRAFAC class TrmE-Era-EngA-EngB-Septin-like GTPase superfamily. EngB GTPase family. The cofactor is Mg(2+).

Necessary for normal cell division and for the maintenance of normal septation. This Histophilus somni (strain 129Pt) (Haemophilus somnus) protein is Probable GTP-binding protein EngB.